Here is a 313-residue protein sequence, read N- to C-terminus: DNA-directed RNA polymerase subunit alpha (313 aa).

An alpha N-terminal domain (alpha-NTD) region spans residues 1-226; it reads MLEIEKPKIE…EHMRLFLGLT (226 aa). An alpha C-terminal domain (alpha-CTD) region spans residues 242 to 313; that stretch reads TRDRLMDMSI…LGLSLRSSEE (72 aa).

This sequence belongs to the RNA polymerase alpha chain family. In terms of assembly, homodimer. The RNAP catalytic core consists of 2 alpha, 1 beta, 1 beta' and 1 omega subunit. When a sigma factor is associated with the core the holoenzyme is formed, which can initiate transcription.

The enzyme catalyses RNA(n) + a ribonucleoside 5'-triphosphate = RNA(n+1) + diphosphate. DNA-dependent RNA polymerase catalyzes the transcription of DNA into RNA using the four ribonucleoside triphosphates as substrates. The sequence is that of DNA-directed RNA polymerase subunit alpha from Moorella thermoacetica (strain ATCC 39073 / JCM 9320).